A 102-amino-acid polypeptide reads, in one-letter code: Pole-localizer protein TmaR (102 aa).

The stretch at 7–34 forms a coiled coil; sequence IINQARRKNKLKRELQDNQKKIRDNQKR.

It belongs to the pole-localizer TmaR family.

The protein localises to the cytoplasm. Its function is as follows. Pole-localizer protein involved in the regulation of several cellular processes. The protein is Pole-localizer protein TmaR of Aliivibrio fischeri (strain ATCC 700601 / ES114) (Vibrio fischeri).